The following is a 270-amino-acid chain: UPF0354 protein BCA_4815 (270 aa).

The protein belongs to the UPF0354 family.

This is UPF0354 protein BCA_4815 from Bacillus cereus (strain 03BB102).